The primary structure comprises 124 residues: Small ribosomal subunit protein uS12 (124 aa).

Asp-89 bears the 3-methylthioaspartic acid mark. The disordered stretch occupies residues 102 to 124 (LDTSGVNNRKHGRSKYGTKRPKS). Positions 109–124 (NRKHGRSKYGTKRPKS) are enriched in basic residues.

The protein belongs to the universal ribosomal protein uS12 family. In terms of assembly, part of the 30S ribosomal subunit. Contacts proteins S8 and S17. May interact with IF1 in the 30S initiation complex.

In terms of biological role, with S4 and S5 plays an important role in translational accuracy. Its function is as follows. Interacts with and stabilizes bases of the 16S rRNA that are involved in tRNA selection in the A site and with the mRNA backbone. Located at the interface of the 30S and 50S subunits, it traverses the body of the 30S subunit contacting proteins on the other side and probably holding the rRNA structure together. The combined cluster of proteins S8, S12 and S17 appears to hold together the shoulder and platform of the 30S subunit. The sequence is that of Small ribosomal subunit protein uS12 from Francisella philomiragia subsp. philomiragia (strain ATCC 25017 / CCUG 19701 / FSC 153 / O#319-036).